Reading from the N-terminus, the 80-residue chain is MAVKKPENMTFEATIEELDSLVDQLENGDLALDDALRKFERGIALARAGQTKLSDAEQRVSILLSEDDEAPLSDFNPESE.

The protein belongs to the XseB family. Heterooligomer composed of large and small subunits.

It localises to the cytoplasm. It carries out the reaction Exonucleolytic cleavage in either 5'- to 3'- or 3'- to 5'-direction to yield nucleoside 5'-phosphates.. Bidirectionally degrades single-stranded DNA into large acid-insoluble oligonucleotides, which are then degraded further into small acid-soluble oligonucleotides. The chain is Exodeoxyribonuclease 7 small subunit from Vibrio campbellii (strain ATCC BAA-1116).